The sequence spans 199 residues: MSYYSTSVAKLIEELSKLPGIGPKTAQRLAFFIINMPLDEVRSLSQAIIEAKEKLRYCKICFNITDKEVCDICSDENRDHSTICVVSHPMDVVAMEKVKEYKGVYHVLHGVISPIEGVGPEDIRIKELLERVRDGSVKEVILATNPDIEGEATAMYIAKLLKPFGVKVTRIAHGIPVGGDLEYTDVVTLSKALEGRREV.

A C4-type zinc finger spans residues 58 to 73 (CKICFNITDKEVCDIC). One can recognise a Toprim domain in the interval 81 to 176 (STICVVSHPM…KVTRIAHGIP (96 aa)).

It belongs to the RecR family.

In terms of biological role, may play a role in DNA repair. It seems to be involved in an RecBC-independent recombinational process of DNA repair. It may act with RecF and RecO. This Caldanaerobacter subterraneus subsp. tengcongensis (strain DSM 15242 / JCM 11007 / NBRC 100824 / MB4) (Thermoanaerobacter tengcongensis) protein is Recombination protein RecR.